Consider the following 318-residue polypeptide: 1-aminocyclopropane-1-carboxylate oxidase (318 aa).

Residues 151-251 (PTFGTKVSNY…RMSIASFYNP (101 aa)) form the Fe2OG dioxygenase domain. Positions 175, 177, and 232 each coordinate Fe cation.

The protein belongs to the iron/ascorbate-dependent oxidoreductase family. Requires Fe cation as cofactor.

It catalyses the reaction 1-aminocyclopropane-1-carboxylate + L-ascorbate + O2 = ethene + L-dehydroascorbate + hydrogen cyanide + CO2 + 2 H2O. Its pathway is alkene biosynthesis; ethylene biosynthesis via S-adenosyl-L-methionine; ethylene from S-adenosyl-L-methionine: step 2/2. This Dendrobium crumenatum (Tropical pigeon orchid) protein is 1-aminocyclopropane-1-carboxylate oxidase (ACO).